A 429-amino-acid polypeptide reads, in one-letter code: Arrestin-related trafficking adapter 10 (429 aa).

It belongs to the ART10 family.

The protein localises to the cytoplasm. Its function is as follows. May regulate endocytosis by recruiting RSP5 ubiquitin ligase activity to specific plasma membrane proteins in response to extracellular stimuli. The protein is Arrestin-related trafficking adapter 10 (ART10) of Lachancea thermotolerans (strain ATCC 56472 / CBS 6340 / NRRL Y-8284) (Yeast).